Reading from the N-terminus, the 305-residue chain is Axin interactor, dorsalization-associated protein B (305 aa).

Acidic residues predominate over residues 126-137; that stretch reads ENLEVEEEEEDG. A disordered region spans residues 126–146; sequence ENLEVEEEEEDGGAGAGSPDL. An axin-binding region spans residues 153–220; that stretch reads GTLLPRLPSE…RKEDTYVHFN (68 aa). The C2 Aida-type domain maps to 156-303; that stretch reads LPRLPSEPGM…LYLHLLQTLL (148 aa).

It belongs to the AIDA family.

In terms of biological role, acts as a ventralizing factor during embryogenesis. Inhibits axin-mediated JNK activation by binding axin and disrupting axin homodimerization. This in turn antagonizes a Wnt/beta-catenin-independent dorsalization pathway activated by axin/JNK-signaling. In Xenopus laevis (African clawed frog), this protein is Axin interactor, dorsalization-associated protein B (aida-b).